Reading from the N-terminus, the 324-residue chain is Protoheme IX farnesyltransferase 2 (324 aa).

The next 9 helical transmembrane spans lie at 39–59 (LIKP…MLLA), 63–83 (IPSP…AGSA), 115–135 (HALV…WATT), 137–157 (LLSA…YTLV), 166–186 (IVWG…GVTG), 192–212 (ALVM…SLAM), 239–259 (IVVF…ATGW), 260–280 (LYTA…HRLH), and 302–322 (LMIV…VLGW).

Belongs to the UbiA prenyltransferase family. Protoheme IX farnesyltransferase subfamily.

The protein resides in the cell membrane. It catalyses the reaction heme b + (2E,6E)-farnesyl diphosphate + H2O = Fe(II)-heme o + diphosphate. The protein operates within porphyrin-containing compound metabolism; heme O biosynthesis; heme O from protoheme: step 1/1. Its function is as follows. Converts heme B (protoheme IX) to heme O by substitution of the vinyl group on carbon 2 of heme B porphyrin ring with a hydroxyethyl farnesyl side group. The protein is Protoheme IX farnesyltransferase 2 of Saccharopolyspora erythraea (strain ATCC 11635 / DSM 40517 / JCM 4748 / NBRC 13426 / NCIMB 8594 / NRRL 2338).